Here is a 75-residue protein sequence, read N- to C-terminus: Protein B (75 aa).

This is Protein B from Dicentrarchus labrax (European seabass).